The following is a 190-amino-acid chain: Dynactin subunit 6 (190 aa).

Thr-186 carries the phosphothreonine; by CDK1 modification.

The protein belongs to the dynactin subunits 5/6 family. Dynactin subunit 6 subfamily. Subunit of dynactin, a multiprotein complex part of a tripartite complex with dynein and a adapter, such as BICDL1, BICD2 or HOOK3. The dynactin complex is built around ACTR1A/ACTB filament and consists of an actin-related filament composed of a shoulder domain, a pointed end and a barbed end. Its length is defined by its flexible shoulder domain. The soulder is composed of 2 DCTN1 subunits, 4 DCTN2 and 2 DCTN3. The 4 DCNT2 (via N-terminus) bind the ACTR1A filament and act as molecular rulers to determine the length. The pointed end is important for binding dynein-dynactin cargo adapters. Consists of 4 subunits: ACTR10, DCNT4, DCTN5 and DCTN6. Within the complex DCTN6 forms a heterodimer with DCTN5. The barbed end is composed of a CAPZA1:CAPZB heterodimers, which binds ACTR1A/ACTB filament and dynactin and stabilizes dynactin. Interacts with PLK1. Interacts with N4BP2L1. In terms of processing, phosphorylation at Thr-186 by CDK1 during mitotic prometaphase creates a binding site for PLK1 that facilitates its recruitment to kinetochores.

It localises to the cytoplasm. The protein localises to the cytoskeleton. It is found in the chromosome. The protein resides in the centromere. Its subcellular location is the kinetochore. Its function is as follows. Part of the dynactin complex that activates the molecular motor dynein for ultra-processive transport along microtubules. The polypeptide is Dynactin subunit 6 (DCTN6) (Pongo abelii (Sumatran orangutan)).